The following is a 336-amino-acid chain: Dihydroorotate dehydrogenase (quinone) (336 aa).

Residues 62–66 and Thr-86 each bind FMN; that span reads AGLDK. Lys-66 lines the substrate pocket. Residue 111 to 115 coordinates substrate; that stretch reads NRMGF. Positions 139 and 172 each coordinate FMN. Asn-172 is a substrate binding site. The active-site Nucleophile is Ser-175. Asn-177 serves as a coordination point for substrate. The FMN site is built by Lys-217 and Thr-245. Residue 246–247 coordinates substrate; the sequence is NT. Residues Gly-268, Gly-297, and 318–319 each bind FMN; that span reads YS.

It belongs to the dihydroorotate dehydrogenase family. Type 2 subfamily. In terms of assembly, monomer. Requires FMN as cofactor.

It is found in the cell membrane. The catalysed reaction is (S)-dihydroorotate + a quinone = orotate + a quinol. Its pathway is pyrimidine metabolism; UMP biosynthesis via de novo pathway; orotate from (S)-dihydroorotate (quinone route): step 1/1. Functionally, catalyzes the conversion of dihydroorotate to orotate with quinone as electron acceptor. This is Dihydroorotate dehydrogenase (quinone) from Serratia proteamaculans (strain 568).